We begin with the raw amino-acid sequence, 121 residues long: Small ribosomal subunit protein uS13 (121 aa).

Positions 91-121 (HRRGLPVRGQNTKNNARTRKGKKASMAGKKK) are disordered. Basic residues predominate over residues 106 to 121 (ARTRKGKKASMAGKKK).

This sequence belongs to the universal ribosomal protein uS13 family. As to quaternary structure, part of the 30S ribosomal subunit. Forms a loose heterodimer with protein S19. Forms two bridges to the 50S subunit in the 70S ribosome.

Its function is as follows. Located at the top of the head of the 30S subunit, it contacts several helices of the 16S rRNA. In the 70S ribosome it contacts the 23S rRNA (bridge B1a) and protein L5 of the 50S subunit (bridge B1b), connecting the 2 subunits; these bridges are implicated in subunit movement. Contacts the tRNAs in the A and P-sites. The protein is Small ribosomal subunit protein uS13 of Lacticaseibacillus paracasei (strain ATCC 334 / BCRC 17002 / CCUG 31169 / CIP 107868 / KCTC 3260 / NRRL B-441) (Lactobacillus paracasei).